The following is a 668-amino-acid chain: Spartin (668 aa).

Methionine 1 is modified (N-acetylmethionine). Residues 16–94 form the MIT domain; that stretch reads IKEAYKKAFV…LQNVRTRLEI (79 aa). A disordered region spans residues 110-176; that stretch reads VPKLYPEFPP…PSEAPPAYTP (67 aa). Residues 118 to 127 show a composition bias toward basic and acidic residues; the sequence is PPKDMSEKSP. Serine 126 carries the post-translational modification Phosphoserine. Residues 128–162 show a composition bias toward low complexity; that stretch reads EPQSLSSLPQHSEVNGSTSTASAESSSTPTTLSLP. The ubiquitin-binding region (UBR) domain stretch occupies residues 190 to 380; it reads ESGEFSSVGE…QLDPSSKDVR (191 aa). The LC3-interacting region (LIR); mediates interaction with MAP1LC3A AND MAP1LC3C motif lies at 193-200; the sequence is EFSSVGEN. The disordered stretch occupies residues 348-396; it reads FQIPGISGSASDQLKEASGTDVRQLDPSSKDVRQKGKRGKKTKGTSSEE. Residue lysine 362 forms a Glycyl lysine isopeptide (Lys-Gly) (interchain with G-Cter in ubiquitin) linkage. Residues 427-611 form the Senescence domain; the sequence is ILSGASWVSW…YNIDNIGIKA (185 aa). Residues 431-503 are required for localization to lipid droplets; sequence ASWVSWGLVK…LVDGVCTVAN (73 aa). Residue serine 470 is modified to Phosphoserine. A disordered region spans residues 631–668; that stretch reads IDNSKGENPGGGASANLKGEKDEQKEGPEKNGAKKKDK. Basic and acidic residues predominate over residues 648-668; the sequence is KGEKDEQKEGPEKNGAKKKDK.

As to quaternary structure, interacts with ITCH and WWP1. Interacts (via MIT domain) with IST1; leading to the recruitment of SPART to midbodies. Interacts with MAP1LC3A and MAP1LC3C. Post-translationally, ubiquitinated; ubiquitination does not require ITCH and WWP1.

It is found in the cytoplasm. The protein localises to the midbody. Its subcellular location is the lipid droplet. Lipophagy receptor that plays an important role in lipid droplet (LD) turnover in motor neurons. Localizes to LDs and interacts with components of the autophagy machinery, such as MAP1LC3A/C proteins to deliver LDs to autophagosomes for degradation via lipophagy. Lipid transfer protein required for lipid droplet degradation, including by lipophagy. Can bind and transfer all lipid species found in lipid droplets, from phospholipids to triglycerides and sterol esters but the direction of lipid transfer by spartin and its cargos are unknown. May be implicated in endosomal trafficking, or microtubule dynamics, or both. Participates in cytokinesis. This is Spartin from Bos taurus (Bovine).